Reading from the N-terminus, the 113-residue chain is Class I hydrophobin POH3 (113 aa).

The signal sequence occupies residues 1–21 (MFSRVIFCTFLILPLLAAATA). 4 disulfide bridges follow: Cys32/Cys92, Cys39/Cys86, Cys40/Cys73, and Cys93/Cys106. A glycan (N-linked (GlcNAc...) asparagine) is linked at Asn110.

This sequence belongs to the fungal hydrophobin family. In terms of assembly, self-assembles to form functional amyloid fibrils called rodlets. Self-assembly into fibrillar rodlets occurs spontaneously at hydrophobic:hydrophilic interfaces and the rodlets further associate laterally to form amphipathic monolayers. In terms of tissue distribution, expressionn is switched off in the fruiting bodies but abundantly expressed in the vegetative mycelium of both monokaryon and dikaryon.

Its subcellular location is the secreted. It is found in the cell wall. In terms of biological role, aerial growth, conidiation, and dispersal of filamentous fungi in the environment rely upon a capability of their secreting small amphipathic proteins called hydrophobins (HPBs) with low sequence identity. Class I can self-assemble into an outermost layer of rodlet bundles on aerial cell surfaces, conferring cellular hydrophobicity that supports fungal growth, development and dispersal; whereas Class II form highly ordered films at water-air interfaces through intermolecular interactions but contribute nothing to the rodlet structure. POH3 is a class I hydrophobin that causes a large drop in the water-surface tension, enabling hyphae to breach the interface and grow into the air, in both the primary and the secondary mycelium. In the latter mycelium POH3 maight also play a role in the emergence of fruiting bodies. Secreted POH3 could also play a role in facilitating lignin degradation. The chain is Class I hydrophobin POH3 from Pleurotus ostreatus (Oyster mushroom).